The sequence spans 144 residues: Nucleoside diphosphate kinase (144 aa).

Lysine 11, phenylalanine 59, arginine 87, threonine 93, arginine 104, and asparagine 114 together coordinate ATP. The Pros-phosphohistidine intermediate role is filled by histidine 117.

It belongs to the NDK family. In terms of assembly, homotetramer. Mg(2+) is required as a cofactor.

It is found in the cytoplasm. The enzyme catalyses a 2'-deoxyribonucleoside 5'-diphosphate + ATP = a 2'-deoxyribonucleoside 5'-triphosphate + ADP. It catalyses the reaction a ribonucleoside 5'-diphosphate + ATP = a ribonucleoside 5'-triphosphate + ADP. Major role in the synthesis of nucleoside triphosphates other than ATP. The ATP gamma phosphate is transferred to the NDP beta phosphate via a ping-pong mechanism, using a phosphorylated active-site intermediate. The sequence is that of Nucleoside diphosphate kinase from Vibrio atlanticus (strain LGP32) (Vibrio splendidus (strain Mel32)).